Consider the following 364-residue polypeptide: Formimidoylglutamase (364 aa).

His133, Asp189, His191, Asp193, Asp286, and Asp288 together coordinate Mn(2+).

The protein belongs to the arginase family. It depends on Mn(2+) as a cofactor.

It catalyses the reaction N-formimidoyl-L-glutamate + H2O = formamide + L-glutamate. It participates in amino-acid degradation; L-histidine degradation into L-glutamate; L-glutamate from N-formimidoyl-L-glutamate (hydrolase route): step 1/1. Catalyzes the conversion of N-formimidoyl-L-glutamate to L-glutamate and formamide. The chain is Formimidoylglutamase from Photobacterium profundum (strain SS9).